The primary structure comprises 309 residues: NADH-cytochrome b5 reductase 1 (309 aa).

Residues 30–50 (FVPYAVAVTAILAGLKLFTGG) traverse the membrane as a helical segment. The FAD-binding FR-type domain maps to 60–165 (TEFQEFVLKE…RGPKGAMVYT (106 aa)). Residues 145–160 (TTLKIGDTMKVRGPKG) and 171–208 (HIGMIAGGTGITPMLQIIKAVIRNRPRNGGNDTTKLDL) each bind FAD.

The protein belongs to the flavoprotein pyridine nucleotide cytochrome reductase family. As to quaternary structure, monomer. Component of the 2-(3-amino-3-carboxypropyl)histidine synthase complex composed of dph1, dph2, dph3 and a NADH-dependent reductase, predominantly cbr1. FAD serves as cofactor.

The protein localises to the mitochondrion outer membrane. It catalyses the reaction 2 Fe(III)-[cytochrome b5] + NADH = 2 Fe(II)-[cytochrome b5] + NAD(+) + H(+). The enzyme catalyses 2 Fe(3+)-[Dph3] + NADH = 2 Fe(2+)-[Dph3] + NAD(+) + H(+). It participates in protein modification; peptidyl-diphthamide biosynthesis. NADH-dependent reductase for dph3 and cytochrome b5. Required for the first step of diphthamide biosynthesis, a post-translational modification of histidine which occurs in elongation factor 2. Dph1 and dph2 transfer a 3-amino-3-carboxypropyl (ACP) group from S-adenosyl-L-methionine (SAM) to a histidine residue, the reaction is assisted by a reduction system comprising dph3 and a NADH-dependent reductase, predominantly cbr1. By reducing dph3, also involved in the formation of the tRNA wobble base modification mcm5s 2U (5-methoxycarbonylmethyl-2-thiouridine), mediated by the elongator complex. The cytochrome b5/NADH cytochrome b5 reductase electron transfer system supports the catalytic activity of several sterol biosynthetic enzymes. This is NADH-cytochrome b5 reductase 1 (cbr1) from Aspergillus fumigatus (strain ATCC MYA-4609 / CBS 101355 / FGSC A1100 / Af293) (Neosartorya fumigata).